The primary structure comprises 114 residues: Non-specific lipid-transfer protein 2 (114 aa).

The N-terminal stretch at 1–23 (MEMFGKIACFVVFCMVVVAPHAE) is a signal peptide. Intrachain disulfides connect C27/C73, C37/C50, C51/C96, and C71/C110.

The protein belongs to the plant LTP family.

Its function is as follows. Plant non-specific lipid-transfer proteins transfer phospholipids as well as galactolipids across membranes. May play a role in wax or cutin deposition in the cell walls of expanding epidermal cells and certain secretory tissues. The chain is Non-specific lipid-transfer protein 2 (LE16) from Solanum lycopersicum (Tomato).